The chain runs to 241 residues: Purine nucleoside phosphorylase DeoD-type 1 (241 aa).

His-5 lines the a purine D-ribonucleoside pocket. Phosphate is bound by residues Gly-21, Arg-25, Arg-44, and 88–91; that span reads RVGS. A purine D-ribonucleoside contacts are provided by residues 180-182 and 204-205; these read EME and SD. Asp-205 acts as the Proton donor in catalysis.

This sequence belongs to the PNP/UDP phosphorylase family. Homohexamer; trimer of homodimers.

The enzyme catalyses a purine D-ribonucleoside + phosphate = a purine nucleobase + alpha-D-ribose 1-phosphate. It catalyses the reaction a purine 2'-deoxy-D-ribonucleoside + phosphate = a purine nucleobase + 2-deoxy-alpha-D-ribose 1-phosphate. Catalyzes the reversible phosphorolytic breakdown of the N-glycosidic bond in the beta-(deoxy)ribonucleoside molecules, with the formation of the corresponding free purine bases and pentose-1-phosphate. The protein is Purine nucleoside phosphorylase DeoD-type 1 of Vibrio cholerae serotype O1 (strain ATCC 39315 / El Tor Inaba N16961).